The following is a 477-amino-acid chain: MQVLHVCSEMFPLLKTGGLADVIGALPAAQIADGVDVRVLLPGFPDIRRGIPDAHVVSRRDTFAGKISLLFGHYNGVGIYLIDAPHLYERPGSPYHDTNLYAYIDNVLRFALLGWVGCEMACGLDPFWRPDVVHAHDWHAGLAPAYLAARGRPAKSVFTVHNLAYQGMFYAKHMDDIELPWSFFNMHGLEFNGQLSFLKAGLYYADHITAVSPTYAREITEPQFAYGMEGLLRQRHLEGRLSGILNGVDEKIWNPESDLLLASRYTRDTLEEKAENKRQLQIAMGLKVNDKVPLFAVVSRLTNQKGLDLVLEALPGLLEQGGQLALLGAGDPVLQEGFLAAAAEHPGQAGVQIGYHEAFSHRIMGGADVILVPSRFEPCGLTQLYGLKYGTLPLVRRTGGLADTVSDSSLENLADGIASGFVFEDSNAWSLLRAIRRAFVLWSRPSLWRFVQRQAMAMDFSWQVAAKSYRELYYRLK.

Lysine 15 provides a ligand contact to ADP-alpha-D-glucose.

Belongs to the glycosyltransferase 1 family. Bacterial/plant glycogen synthase subfamily.

The catalysed reaction is [(1-&gt;4)-alpha-D-glucosyl](n) + ADP-alpha-D-glucose = [(1-&gt;4)-alpha-D-glucosyl](n+1) + ADP + H(+). It functions in the pathway glycan biosynthesis; glycogen biosynthesis. Synthesizes alpha-1,4-glucan chains using ADP-glucose. This is Glycogen synthase from Salmonella typhi.